A 243-amino-acid chain; its full sequence is Venom peptide isomerase heavy chain (243 aa).

One can recognise a Peptidase S1 domain in the interval 1 to 243 (IVGGKTAKFG…YTNWMSKNMV (243 aa)). Cys31 and Cys47 are oxidised to a cystine. Active-site charge relay system residues include His46 and Asp96. N-linked (GlcNAc...) asparagine glycosylation is present at Asn127. Disulfide bonds link Cys159–Cys181 and Cys190–Cys219. The active-site Charge relay system is the Ser194.

The protein belongs to the peptidase S1 family. As to quaternary structure, heterodimer with venom peptide isomerase light chain; disulfide-linked. N-linked glycan at Asn-127 consists of Man3-GlcNAc2-Fuc. Expressed by the venom gland.

Its subcellular location is the secreted. In terms of biological role, peptide isomerase that inverts the chirality at the Ser-81 of omega-Aga IVB. Acts cofactor-independently. This chain is Venom peptide isomerase heavy chain, found in Agelenopsis aperta (North American funnel-web spider).